Reading from the N-terminus, the 530-residue chain is Na(+)/H(+) antiporter NhaB (530 aa).

10 consecutive transmembrane segments (helical) span residues 13–33, 67–87, 90–110, 138–158, 205–225, 245–265, 302–333, 350–370, 449–469, and 477–497; these read FLGQAPAWYKYTIVAFLLINP, PGGLLAIEAVMIGLTSAETVL, VVGNIEVMLLLIFMVAGIYFL, AAALLSAFLDALTVTAVVIAV, LLMHAAVGTALGGVCTLVGEP, MAPITLPVLVMGFFTCAFLEF, LVIQAITAVWLVIGLATHAASVGLVGLTVIIL, FEEALPFTALLTVFFAVVAVI, VATPNGQAAFLFLLTSALAPL, and MVIMALPYTIVMSITGLVMTA.

It belongs to the NhaB Na(+)/H(+) (TC 2.A.34) antiporter family.

It localises to the cell inner membrane. The catalysed reaction is 2 Na(+)(in) + 3 H(+)(out) = 2 Na(+)(out) + 3 H(+)(in). Functionally, na(+)/H(+) antiporter that extrudes sodium in exchange for external protons. The chain is Na(+)/H(+) antiporter NhaB from Alcanivorax borkumensis (strain ATCC 700651 / DSM 11573 / NCIMB 13689 / SK2).